Here is a 467-residue protein sequence, read N- to C-terminus: Mothers against decapentaplegic homolog 2 (467 aa).

N-acetylserine is present on Ser2. A Phosphothreonine modification is found at Thr8. An MH1 domain is found at 10-176 (PVVKRLLGWK…YQRVETPVLP (167 aa)). Lys19 is subject to N6-acetyllysine. Cys74, Cys149, Cys161, and His166 together coordinate Zn(2+). Residues 207–217 (PAGIEPQSNYI) are compositionally biased toward polar residues. The segment at 207–251 (PAGIEPQSNYIPETPPPGYISEDGETSDQQLNQSMDTGSPAELSP) is disordered. Thr220 carries the post-translational modification Phosphothreonine. Residues 221 to 225 (PPPGY) carry the PY-motif motif. A compositionally biased stretch (polar residues) spans 233 to 243 (SDQQLNQSMDT). Residue Ser240 is modified to Phosphoserine; by CAMK2. 6 positions are modified to phosphoserine: Ser245, Ser250, Ser255, Ser458, Ser460, and Ser464. One can recognise an MH2 domain in the interval 274–467 (WCSIAYYELN…SPSVRCSSMS (194 aa)). Ser465 and Ser467 each carry phosphoserine; by TGFBR1.

Belongs to the dwarfin/SMAD family. As to quaternary structure, monomer; in the absence of TGF-beta. Heterodimer; in the presence of TGF-beta. Forms a heterodimer with co-SMAD, SMAD4, in the nucleus to form the transactivation complex SMAD2/SMAD4. Found in a complex with SMAD3 and TRIM33 upon addition of TGF-beta. Identified in a complex that contains at least ZNF451, SMAD2, SMAD3 and SMAD4. Interacts (via the MH2 domain) with ZFYVE9; may form trimers with the SMAD4 co-SMAD. Interacts with TAZ/WWRT1. Interacts with FOXH1. Interacts with SNW1. Interacts with CREB-binding protein (CBP) and EP300. Interacts with SNON. Interacts with ALK4/ACVR1B. Interacts with SKOR1. Interacts with SKOR2. Interacts with PRDM16. Interacts (via MH2 domain) with LEMD3. Interacts with RBPMS. Interacts with WWP1. Interacts (dephosphorylated form, via the MH1 and MH2 domains) with RANBP3 (via its C-terminal R domain); the interaction results in the export of dephosphorylated SMAD3 out of the nucleus and termination of the TGF-beta signaling. Interacts with PDPK1 (via PH domain). Interacts with DAB2; the interactions are enhanced upon TGF-beta stimulation. Interacts with USP15. Interacts with PPP5C. Interacts with LDLRAD4 (via the SMAD interaction motif). Interacts (via MH2 domain) with PMEPA1 (via the SMAD interaction motif). Interacts with ZFHX3. Interacts with ZNF451. Interacts with SMURF2 when phosphorylated on Ser-465/467. Interacts with PPM1A. Interacts with TGF-beta. Interacts with TGFBR1. Interacts with TGIF. Interacts with SMAD3 and TRIM33. Interacts with ZNF580. Interacts with NEDD4L in response to TGF-beta. Interacts with HGS. Interacts with AIP1. Interacts with WWP1. Interacts with PML. Interacts weakly with ZNF8. Interacts (when phosphorylated) with RNF111; RNF111 acts as an enhancer of the transcriptional responses by mediating ubiquitination and degradation of SMAD2 inhibitors. Interacts with YAP1 (when phosphorylated at 'Ser-55'). Interacts when phosphorylated with IPO7; the interaction facilitates translocation of SMAD2 to the nucleus. Interacts with MTMR4; negatively regulates TGF-beta signaling through SMAD2 dephosphorylation and retention in endosomes. In terms of processing, in response to TGF-beta, phosphorylated on the C-terminal SXS motif by TGF-beta and activin type 1 receptor kinases, phosphorylation declines progressively in a KMT5A-dependent manner. Phosphorylation in this motif is required for interaction with a number of proteins including SMURF2, SNON and SMAD4 in response to TGF-beta. Dephosphorylated in this motif by PPM1A leading to disruption of the SMAD2/3-SMAD4 complex, nuclear export and termination of the TGF-beta signaling. In response to decorin, the naturally occurring inhibitor of TGF-beta signaling, phosphorylated on Ser-240 by CaMK2. Phosphorylated by MAPK3 upon EGF stimulation; which increases transcriptional activity and stability, and is blocked by calmodulin. Phosphorylated by PDPK1. Acetylated on Lys-19 by coactivators in response to TGF-beta signaling, which increases transcriptional activity. Post-translationally, in response to TGF-beta, ubiquitinated by NEDD4L; which promotes its degradation. Monoubiquitinated, leading to prevent DNA-binding. Deubiquitination by USP15 alleviates inhibition and promotes activation of TGF-beta target genes. Ubiquitinated by RNF111, leading to its degradation: only SMAD2 proteins that are 'in use' are targeted by RNF111, RNF111 playing a key role in activating SMAD2 and regulating its turnover.

Its subcellular location is the cytoplasm. It localises to the nucleus. Receptor-regulated SMAD (R-SMAD) that is an intracellular signal transducer and transcriptional modulator activated by TGF-beta (transforming growth factor) and activin type 1 receptor kinases. Binds the TRE element in the promoter region of many genes that are regulated by TGF-beta and, on formation of the SMAD2/SMAD4 complex, activates transcription. Promotes TGFB1-mediated transcription of odontoblastic differentiation genes in dental papilla cells. Positively regulates PDPK1 kinase activity by stimulating its dissociation from the 14-3-3 protein YWHAQ which acts as a negative regulator. This chain is Mothers against decapentaplegic homolog 2 (SMAD2), found in Pongo abelii (Sumatran orangutan).